Reading from the N-terminus, the 158-residue chain is 6,7-dimethyl-8-ribityllumazine synthase (158 aa).

Residues phenylalanine 24, 58–60 (AFE), and 82–84 (AVI) contribute to the 5-amino-6-(D-ribitylamino)uracil site. 87–88 (GT) lines the (2S)-2-hydroxy-3-oxobutyl phosphate pocket. The active-site Proton donor is histidine 90. Phenylalanine 115 contacts 5-amino-6-(D-ribitylamino)uracil. Arginine 129 serves as a coordination point for (2S)-2-hydroxy-3-oxobutyl phosphate.

This sequence belongs to the DMRL synthase family. In terms of assembly, forms an icosahedral capsid composed of 60 subunits, arranged as a dodecamer of pentamers.

The catalysed reaction is (2S)-2-hydroxy-3-oxobutyl phosphate + 5-amino-6-(D-ribitylamino)uracil = 6,7-dimethyl-8-(1-D-ribityl)lumazine + phosphate + 2 H2O + H(+). It participates in cofactor biosynthesis; riboflavin biosynthesis; riboflavin from 2-hydroxy-3-oxobutyl phosphate and 5-amino-6-(D-ribitylamino)uracil: step 1/2. Functionally, catalyzes the formation of 6,7-dimethyl-8-ribityllumazine by condensation of 5-amino-6-(D-ribitylamino)uracil with 3,4-dihydroxy-2-butanone 4-phosphate. This is the penultimate step in the biosynthesis of riboflavin. This is 6,7-dimethyl-8-ribityllumazine synthase from Ectopseudomonas mendocina (strain ymp) (Pseudomonas mendocina).